Consider the following 183-residue polypeptide: UPF0114 protein HI_0507 (183 aa).

3 helical membrane passes run 30–50 (LQVP…YKFI), 68–88 (IMLG…LVMV), and 150–170 (TMMW…ALAY).

It belongs to the UPF0114 family.

The protein resides in the cell membrane. This is UPF0114 protein HI_0507 from Haemophilus influenzae (strain ATCC 51907 / DSM 11121 / KW20 / Rd).